The chain runs to 422 residues: Mannose-1-phosphate guanylyltransferase regulatory subunit alpha-A (422 aa).

The segment at 2-253 (LKAVILIGGP…DRFWSQIKSA (252 aa)) is substrate-binding domain. Glu85 and Gln249 together coordinate GDP-alpha-D-mannose. The interval 275 to 422 (LATNTEGGAK…NRSFKNQIIL (148 aa)) is hexapeptide repeat domain. The segment at 358–386 (TPSDPNPNDPYAKIDSETLFRDGKLTPSI) is C-loop.

The protein belongs to the transferase hexapeptide repeat family. In terms of assembly, component of the GMPPA-GMPPB mannose-1-phosphate guanylyltransferase complex composed of 4 gmppa subunits and 8 gmppb subunits; the complex is organized into three layers, a central layer made up of 2 gmppa dimers sandwiched between two layers each made up of 2 gmppb dimers.

The protein operates within nucleotide-sugar biosynthesis; GDP-alpha-D-mannose biosynthesis; GDP-alpha-D-mannose from alpha-D-mannose 1-phosphate (GTP route): step 1/1. Its function is as follows. Regulatory subunit of the GMPPA-GMPPB mannose-1-phosphate guanylyltransferase complex; reduces the catalytic activity of GMPPB when part of the complex. Mediates allosteric feedback inhibition of GMPPB catalytic activity upon binding GDP-alpha-D-mannose. Together with GMPPB regulates GDP-alpha-D-mannose levels. One of two paralogs (gmppaa and gmppab) that may have redundant functions. The protein is Mannose-1-phosphate guanylyltransferase regulatory subunit alpha-A (gmppaa) of Danio rerio (Zebrafish).